We begin with the raw amino-acid sequence, 658 residues long: UvrABC system protein B (658 aa).

The Helicase ATP-binding domain occupies 26–414 (AGLKKGLKHQ…PDVIEQIIRP (389 aa)). An ATP-binding site is contributed by 39–46 (GATGTGKT). The Beta-hairpin signature appears at 92–115 (YYDYYQPEAYVPQSDTYIEKDASI). The Helicase C-terminal domain maps to 430–592 (QIDDLMDEIN…ITPKTIKKEI (163 aa)). The 37-residue stretch at 622-658 (DVFIEGMEHEMKEAAKALDFERAAELRDALLEIKAEG) folds into the UVR domain.

The protein belongs to the UvrB family. Forms a heterotetramer with UvrA during the search for lesions. Interacts with UvrC in an incision complex.

Its subcellular location is the cytoplasm. The UvrABC repair system catalyzes the recognition and processing of DNA lesions. A damage recognition complex composed of 2 UvrA and 2 UvrB subunits scans DNA for abnormalities. Upon binding of the UvrA(2)B(2) complex to a putative damaged site, the DNA wraps around one UvrB monomer. DNA wrap is dependent on ATP binding by UvrB and probably causes local melting of the DNA helix, facilitating insertion of UvrB beta-hairpin between the DNA strands. Then UvrB probes one DNA strand for the presence of a lesion. If a lesion is found the UvrA subunits dissociate and the UvrB-DNA preincision complex is formed. This complex is subsequently bound by UvrC and the second UvrB is released. If no lesion is found, the DNA wraps around the other UvrB subunit that will check the other stand for damage. In Listeria monocytogenes serotype 4b (strain F2365), this protein is UvrABC system protein B.